Reading from the N-terminus, the 188-residue chain is dCTP deaminase (188 aa).

Residues 111–116 (KSTYAR), 135–137 (TLE), Q156, Y170, and Q180 contribute to the dCTP site. E137 (proton donor/acceptor) is an active-site residue.

This sequence belongs to the dCTP deaminase family. As to quaternary structure, homotrimer.

The catalysed reaction is dCTP + H2O + H(+) = dUTP + NH4(+). It participates in pyrimidine metabolism; dUMP biosynthesis; dUMP from dCTP (dUTP route): step 1/2. Catalyzes the deamination of dCTP to dUTP. In Chromohalobacter salexigens (strain ATCC BAA-138 / DSM 3043 / CIP 106854 / NCIMB 13768 / 1H11), this protein is dCTP deaminase.